The following is a 614-amino-acid chain: Leucine aminopeptidase 2 (614 aa).

A peptide contacts are provided by residues 139 to 141 (QCQ) and 271 to 276 (PYGGME). Residue His300 participates in Zn(2+) binding. The active-site Proton acceptor is Glu301. The Zn(2+) site is built by His304 and Glu323. The Proton donor role is filled by Tyr385.

It belongs to the peptidase M1 family. Zn(2+) serves as cofactor.

It localises to the cytoplasm. The protein resides in the nucleus. It catalyses the reaction an epoxide + H2O = an ethanediol. Aminopeptidase that preferentially cleaves di- and tripeptides. Also has low epoxide hydrolase activity (in vitro). Can hydrolyze the epoxide leukotriene LTA(4) but it forms preferentially 5,6-dihydroxy-7,9,11,14-eicosatetraenoic acid rather than the cytokine leukotriene B(4) as the product compared to the homologous mammalian enzyme (in vitro). This chain is Leucine aminopeptidase 2, found in Aspergillus fumigatus (strain ATCC MYA-4609 / CBS 101355 / FGSC A1100 / Af293) (Neosartorya fumigata).